A 76-amino-acid polypeptide reads, in one-letter code: Translational regulator CsrA (76 aa).

It belongs to the CsrA/RsmA family. As to quaternary structure, homodimer; the beta-strands of each monomer intercalate to form a hydrophobic core, while the alpha-helices form wings that extend away from the core.

It is found in the cytoplasm. Its function is as follows. A translational regulator that binds mRNA to regulate translation initiation and/or mRNA stability. Usually binds in the 5'-UTR at or near the Shine-Dalgarno sequence preventing ribosome-binding, thus repressing translation. Its main target seems to be the major flagellin gene, while its function is anatagonized by FliW. The chain is Translational regulator CsrA from Helicobacter pylori (strain J99 / ATCC 700824) (Campylobacter pylori J99).